A 279-amino-acid chain; its full sequence is HTH-type transcriptional regulator HdfR (279 aa).

The HTH lysR-type domain occupies 1–58 (MDTELLKTFLEVSRTRHFGRAAESLYLTQSAVSFRIRQLENQLGVNLFTRHRNNIRLT). Residues 18–37 (FGRAAESLYLTQSAVSFRIR) constitute a DNA-binding region (H-T-H motif).

The protein belongs to the LysR transcriptional regulatory family.

Its function is as follows. Negatively regulates the transcription of the flagellar master operon flhDC by binding to the upstream region of the operon. The sequence is that of HTH-type transcriptional regulator HdfR from Escherichia coli O6:K15:H31 (strain 536 / UPEC).